The sequence spans 89 residues: Putative regulatory protein RBAM_015500 (89 aa).

Belongs to the RemA family.

The protein is Putative regulatory protein RBAM_015500 of Bacillus velezensis (strain DSM 23117 / BGSC 10A6 / LMG 26770 / FZB42) (Bacillus amyloliquefaciens subsp. plantarum).